A 199-amino-acid polypeptide reads, in one-letter code: Chaperone protein TorD (199 aa).

The protein belongs to the TorD/DmsD family. TorD subfamily.

It is found in the cytoplasm. Functionally, involved in the biogenesis of TorA. Acts on TorA before the insertion of the molybdenum cofactor and, as a result, probably favors a conformation of the apoenzyme that is competent for acquiring the cofactor. This is Chaperone protein TorD from Escherichia coli (strain K12 / MC4100 / BW2952).